The chain runs to 250 residues: Leucyl/phenylalanyl-tRNA--protein transferase (250 aa).

This sequence belongs to the L/F-transferase family.

The protein resides in the cytoplasm. It catalyses the reaction N-terminal L-lysyl-[protein] + L-leucyl-tRNA(Leu) = N-terminal L-leucyl-L-lysyl-[protein] + tRNA(Leu) + H(+). The enzyme catalyses N-terminal L-arginyl-[protein] + L-leucyl-tRNA(Leu) = N-terminal L-leucyl-L-arginyl-[protein] + tRNA(Leu) + H(+). It carries out the reaction L-phenylalanyl-tRNA(Phe) + an N-terminal L-alpha-aminoacyl-[protein] = an N-terminal L-phenylalanyl-L-alpha-aminoacyl-[protein] + tRNA(Phe). In terms of biological role, functions in the N-end rule pathway of protein degradation where it conjugates Leu, Phe and, less efficiently, Met from aminoacyl-tRNAs to the N-termini of proteins containing an N-terminal arginine or lysine. The polypeptide is Leucyl/phenylalanyl-tRNA--protein transferase (Cupriavidus pinatubonensis (strain JMP 134 / LMG 1197) (Cupriavidus necator (strain JMP 134))).